A 978-amino-acid polypeptide reads, in one-letter code: Calsyntenin-1 (978 aa).

A signal peptide spans methionine 1–threonine 26. At serine 27–histidine 876 the chain is on the extracellular side. Cadherin domains follow at residues glutamine 37–phenylalanine 143 and leucine 144–arginine 249. An N-linked (GlcNAc...) asparagine glycan is attached at asparagine 53. N-linked (GlcNAc...) asparagine glycans are attached at residues asparagine 304, asparagine 486, asparagine 608, and asparagine 823. The helical transmembrane segment at valine 877–isoleucine 897 threads the bilayer. Residues alanine 898 to glutamine 978 lie on the Cytoplasmic side of the membrane. The tract at residues alanine 937–leucine 958 is disordered. Over residues glutamate 948 to alanine 957 the composition is skewed to acidic residues.

Belongs to the calsyntenin family.

The protein localises to the postsynaptic cell membrane. Postsynaptic adhesion molecule that binds to presynaptic neurexins to mediate both excitatory and inhibitory synapse formation. Promotes synapse development by acting as a cell adhesion molecule at the postsynaptic membrane, which associates with neurexin-alpha at the presynaptic membrane. The polypeptide is Calsyntenin-1 (Cals) (Drosophila melanogaster (Fruit fly)).